A 408-amino-acid polypeptide reads, in one-letter code: RNA-splicing ligase RtcB (408 aa).

5 residues coordinate Mn(2+): aspartate 75, cysteine 78, histidine 168, histidine 185, and histidine 281. 167–171 (NHFIE) is a GMP binding site. GMP contacts are provided by residues 281-282 (HN), 313-316 (PGSM), serine 320, 337-340 (HGAG), and lysine 407. Residue histidine 337 is the GMP-histidine intermediate of the active site.

This sequence belongs to the RtcB family. As to quaternary structure, monomer. It depends on Mn(2+) as a cofactor.

It carries out the reaction a 3'-end 3'-phospho-ribonucleotide-RNA + a 5'-end dephospho-ribonucleoside-RNA + GTP = a ribonucleotidyl-ribonucleotide-RNA + GMP + diphosphate. The catalysed reaction is a 3'-end 2',3'-cyclophospho-ribonucleotide-RNA + a 5'-end dephospho-ribonucleoside-RNA + GTP + H2O = a ribonucleotidyl-ribonucleotide-RNA + GMP + diphosphate + H(+). GTP-dependent RNA ligase that is involved in RNA repair. Joins RNA with 2',3'-cyclic-phosphate or 3'-phosphate ends to RNA with 5'-hydroxy ends. Also acts as a DNA ligase in case of DNA damage by splicing 'dirty' DNA breaks, characterized by 3'-phosphate (or cyclic-phosphate) and 5'-hydroxy ends that cannot be sealed by classical DNA ligases. Repairs tRNA cleaved by colicins D or E5, does not repair damaged 16S rRNA. In terms of biological role, able to catalyze tRNA splicing in vivo in yeast, but bacteria are not known to splice tRNA. The sequence is that of RNA-splicing ligase RtcB from Escherichia coli (strain K12).